The chain runs to 455 residues: Differentiation-associated protein 1 (455 aa).

The first 21 residues, 1-21, serve as a signal peptide directing secretion; it reads MKFKLFLLVFFVFLLPYLSQS. The interval 349 to 434 is disordered; the sequence is IGSSSSSSSS…SDDDLGNPSS (86 aa). The segment covering 351–423 has biased composition (low complexity); it reads SSSSSSSSSS…KSNHTSSESS (73 aa). A lipid anchor (GPI-like-anchor amidated serine) is attached at S433. The propeptide at 434-455 is removed in mature form; it reads SSSILSVSKLIILLISIILYCF.

The protein resides in the cell membrane. Its function is as follows. Plays a role in differentiation. The polypeptide is Differentiation-associated protein 1 (dia1) (Dictyostelium discoideum (Social amoeba)).